Consider the following 195-residue polypeptide: ATP-dependent Clp protease proteolytic subunit (195 aa).

The active-site Nucleophile is the Ser-98. Residue His-123 is part of the active site.

This sequence belongs to the peptidase S14 family. In terms of assembly, fourteen ClpP subunits assemble into 2 heptameric rings which stack back to back to give a disk-like structure with a central cavity, resembling the structure of eukaryotic proteasomes.

Its subcellular location is the cytoplasm. The enzyme catalyses Hydrolysis of proteins to small peptides in the presence of ATP and magnesium. alpha-casein is the usual test substrate. In the absence of ATP, only oligopeptides shorter than five residues are hydrolyzed (such as succinyl-Leu-Tyr-|-NHMec, and Leu-Tyr-Leu-|-Tyr-Trp, in which cleavage of the -Tyr-|-Leu- and -Tyr-|-Trp bonds also occurs).. Cleaves peptides in various proteins in a process that requires ATP hydrolysis. Has a chymotrypsin-like activity. Plays a major role in the degradation of misfolded proteins. The protein is ATP-dependent Clp protease proteolytic subunit of Staphylococcus haemolyticus (strain JCSC1435).